Here is a 245-residue protein sequence, read N- to C-terminus: 4-hydroxy-tetrahydrodipicolinate reductase (245 aa).

Residues Gly7–Val12, Gly75–Thr77, and Ala102–Phe105 contribute to the NAD(+) site. Catalysis depends on His132, which acts as the Proton donor/acceptor. A (S)-2,3,4,5-tetrahydrodipicolinate-binding site is contributed by His133. Lys136 functions as the Proton donor in the catalytic mechanism. Position 142–143 (Gly142–Thr143) interacts with (S)-2,3,4,5-tetrahydrodipicolinate.

The protein belongs to the DapB family.

The protein resides in the cytoplasm. It carries out the reaction (S)-2,3,4,5-tetrahydrodipicolinate + NAD(+) + H2O = (2S,4S)-4-hydroxy-2,3,4,5-tetrahydrodipicolinate + NADH + H(+). The catalysed reaction is (S)-2,3,4,5-tetrahydrodipicolinate + NADP(+) + H2O = (2S,4S)-4-hydroxy-2,3,4,5-tetrahydrodipicolinate + NADPH + H(+). It functions in the pathway amino-acid biosynthesis; L-lysine biosynthesis via DAP pathway; (S)-tetrahydrodipicolinate from L-aspartate: step 4/4. Functionally, catalyzes the conversion of 4-hydroxy-tetrahydrodipicolinate (HTPA) to tetrahydrodipicolinate. The sequence is that of 4-hydroxy-tetrahydrodipicolinate reductase from Mycobacterium sp. (strain KMS).